Reading from the N-terminus, the 694-residue chain is Elongation factor G (694 aa).

Residues 11-285 (KDYRNIGIMA…AVIDYLPSPL (275 aa)) enclose the tr-type G domain. GTP contacts are provided by residues 20-27 (AHIDAGKT), 84-88 (DTPGH), and 138-141 (NKMD).

It belongs to the TRAFAC class translation factor GTPase superfamily. Classic translation factor GTPase family. EF-G/EF-2 subfamily.

The protein resides in the cytoplasm. Catalyzes the GTP-dependent ribosomal translocation step during translation elongation. During this step, the ribosome changes from the pre-translocational (PRE) to the post-translocational (POST) state as the newly formed A-site-bound peptidyl-tRNA and P-site-bound deacylated tRNA move to the P and E sites, respectively. Catalyzes the coordinated movement of the two tRNA molecules, the mRNA and conformational changes in the ribosome. The polypeptide is Elongation factor G (Mycoplasma mobile (strain ATCC 43663 / 163K / NCTC 11711) (Mesomycoplasma mobile)).